A 229-amino-acid polypeptide reads, in one-letter code: Peptidase E (229 aa).

Active-site charge relay system residues include serine 120, aspartate 135, and histidine 157.

Belongs to the peptidase S51 family.

It localises to the cytoplasm. It catalyses the reaction Dipeptidase E catalyzes the hydrolysis of dipeptides Asp-|-Xaa. It does not act on peptides with N-terminal Glu, Asn or Gln, nor does it cleave isoaspartyl peptides.. Hydrolyzes dipeptides containing N-terminal aspartate residues. May play a role in allowing the cell to use peptide aspartate to spare carbon otherwise required for the synthesis of the aspartate family of amino acids. The polypeptide is Peptidase E (Shigella sonnei (strain Ss046)).